Consider the following 110-residue polypeptide: Large ribosomal subunit protein uL24 (110 aa).

The protein belongs to the universal ribosomal protein uL24 family. Part of the 50S ribosomal subunit.

One of two assembly initiator proteins, it binds directly to the 5'-end of the 23S rRNA, where it nucleates assembly of the 50S subunit. Its function is as follows. One of the proteins that surrounds the polypeptide exit tunnel on the outside of the subunit. The protein is Large ribosomal subunit protein uL24 of Chloroflexus aurantiacus (strain ATCC 29366 / DSM 635 / J-10-fl).